The sequence spans 402 residues: S-adenosylmethionine synthase (402 aa).

Residue histidine 15 participates in ATP binding. A Mg(2+)-binding site is contributed by aspartate 17. Glutamate 43 is a K(+) binding site. 2 residues coordinate L-methionine: glutamate 56 and glutamine 99. The tract at residues 99–109 is flexible loop; sequence QSPDIAQGVDT. Residues 174–176, 247–248, aspartate 256, 262–263, alanine 279, and lysine 283 contribute to the ATP site; these read DGK, RF, and RK. Aspartate 256 is a binding site for L-methionine. Lysine 287 contributes to the L-methionine binding site.

This sequence belongs to the AdoMet synthase family. As to quaternary structure, homotetramer; dimer of dimers. Mg(2+) is required as a cofactor. It depends on K(+) as a cofactor.

Its subcellular location is the cytoplasm. The enzyme catalyses L-methionine + ATP + H2O = S-adenosyl-L-methionine + phosphate + diphosphate. Its pathway is amino-acid biosynthesis; S-adenosyl-L-methionine biosynthesis; S-adenosyl-L-methionine from L-methionine: step 1/1. Catalyzes the formation of S-adenosylmethionine (AdoMet) from methionine and ATP. The overall synthetic reaction is composed of two sequential steps, AdoMet formation and the subsequent tripolyphosphate hydrolysis which occurs prior to release of AdoMet from the enzyme. The chain is S-adenosylmethionine synthase from Streptomyces griseus subsp. griseus (strain JCM 4626 / CBS 651.72 / NBRC 13350 / KCC S-0626 / ISP 5235).